The sequence spans 125 residues: Small ribosomal subunit protein uS12 (125 aa).

The disordered stretch occupies residues 9 to 28 (RSERSKLKKKTKSPALKQCP). Asp-89 is subject to 3-methylthioaspartic acid. The segment at 104–125 (AQGVKDRKQGRSKYGTKRPKKA) is disordered. Residues 113–125 (GRSKYGTKRPKKA) show a composition bias toward basic residues.

It belongs to the universal ribosomal protein uS12 family. In terms of assembly, part of the 30S ribosomal subunit. Contacts proteins S8 and S17. May interact with IF1 in the 30S initiation complex.

In terms of biological role, with S4 and S5 plays an important role in translational accuracy. Interacts with and stabilizes bases of the 16S rRNA that are involved in tRNA selection in the A site and with the mRNA backbone. Located at the interface of the 30S and 50S subunits, it traverses the body of the 30S subunit contacting proteins on the other side and probably holding the rRNA structure together. The combined cluster of proteins S8, S12 and S17 appears to hold together the shoulder and platform of the 30S subunit. This is Small ribosomal subunit protein uS12 from Rippkaea orientalis (strain PCC 8801 / RF-1) (Cyanothece sp. (strain PCC 8801)).